The sequence spans 615 residues: Protease 4 (615 aa).

Residues 1–17 are Cytoplasmic-facing; sequence MFQVLKFCWKVLCFIRD. Residues 18–38 form a helical membrane-spanning segment; it reads LVMNVVFLGFVLLLVAIISFS. Residues 39-615 lie on the Periplasmic side of the membrane; it reads SGGKKSTALT…LYCLNCGKVK (577 aa). Lys201 acts as the Proton donor/acceptor in catalysis. The active-site Nucleophile is Ser405.

This sequence belongs to the peptidase S49 family. As to quaternary structure, homotetramer.

It localises to the cell inner membrane. In terms of biological role, digests cleaved signal peptides in vitro, its in vivo function is unknown. This activity is necessary to maintain proper secretion of mature proteins across the membrane. The chain is Protease 4 (sppA) from Haemophilus influenzae (strain ATCC 51907 / DSM 11121 / KW20 / Rd).